A 580-amino-acid polypeptide reads, in one-letter code: Trafficking protein particle complex subunit 14 (580 aa).

Disordered regions lie at residues 90-138 (GMPG…ATTL) and 480-533 (VSHP…RSGS). Gly residues predominate over residues 105 to 116 (PGGGDPGGGGLF). Positions 124–137 (THGPGPATSGGATT) are enriched in low complexity. Serine 491 is modified (phosphoserine). The span at 492–502 (RKSSPSSPAVR) shows a compositional bias: low complexity. Over residues 512 to 525 (LGRSQSFSHQQPSR) the composition is skewed to polar residues. Phosphoserine is present on serine 517. Threonine 541 carries the phosphothreonine modification. Serine 546 carries the post-translational modification Phosphoserine.

In terms of assembly, component of the multisubunit TRAPP II complex, which includes at least TRAPPC1, TRAPPC2, TRAPPC2L, TRAPPC3, TRAPPC4, TRAPPC5, TRAPPC6A/B, TRAPPC9, TRAPPC10 and TRAPPC14. TRAPPC9, TRAPPC10 and TRAPPC14 are specific subunits of the TRAPP II complex. Interacts with alpha-tubulin during mitosis. Interacts with RAB3IP (via the N-terminal region); this interaction mediates RAB3IP association with the TRAPP II complex. Interacts with TRAPPC10. Interacts with FBF1. Broadly expressed. High levels in brain, cerebellum, testis and whole blood.

The protein localises to the cytoplasm. It localises to the cytoskeleton. It is found in the spindle. Its subcellular location is the vesicle. The protein resides in the midbody. Functionally, specific subunit of the TRAPP (transport protein particle) II complex, a highly conserved vesicle tethering complex that functions in late Golgi trafficking as a membrane tether. TRAPP II complex also has GEF activity toward RAB1A. TRAPPC14 is dispensable for TRAPPII complex integrity but mediates RAB3IP preciliary vesicle trafficking to the mother centriole during ciliogenesis. Modulates YAP1 activity as transcriptional regulator. The sequence is that of Trafficking protein particle complex subunit 14 from Homo sapiens (Human).